The chain runs to 195 residues: MRVAEVVRNTSETQIRVKLNLDGTGQQKLATGVPFLDHMLDQIARHGLVDLEVEAHGDTHIDDHHTVEDVGITLGQAVAKAIGDRKGIRRYGHSYVPLDEALSRVVIDFSGRPGLEFHVPFTRARIGTFDVDLSIEFFRGFVNHAGVTLHIDNLRGINAHHQLETVFKAFGRALRAAVELDERAAGQIPSTKGSL.

Belongs to the imidazoleglycerol-phosphate dehydratase family.

The protein localises to the cytoplasm. The enzyme catalyses D-erythro-1-(imidazol-4-yl)glycerol 3-phosphate = 3-(imidazol-4-yl)-2-oxopropyl phosphate + H2O. The protein operates within amino-acid biosynthesis; L-histidine biosynthesis; L-histidine from 5-phospho-alpha-D-ribose 1-diphosphate: step 6/9. The chain is Imidazoleglycerol-phosphate dehydratase from Burkholderia lata (strain ATCC 17760 / DSM 23089 / LMG 22485 / NCIMB 9086 / R18194 / 383).